A 65-amino-acid polypeptide reads, in one-letter code: Weak toxin CM-10 (65 aa).

5 disulfides stabilise this stretch: C3–C24, C6–C11, C17–C42, C46–C57, and C58–C63.

Belongs to the three-finger toxin family. Ancestral subfamily. Orphan group II sub-subfamily. As to expression, expressed by the venom gland.

The protein resides in the secreted. Binds with low affinity to muscular (alpha-1-beta-1-delta-epsilon/CHRNA1-CHRNB1-CHRND-CHRNE) and very low affinity to neuronal (alpha-7/CHRNA7) nicotinic acetylcholine receptor (nAChR). The polypeptide is Weak toxin CM-10 (Naja nivea (Cape cobra)).